A 358-amino-acid polypeptide reads, in one-letter code: Phospho-N-acetylmuramoyl-pentapeptide-transferase (358 aa).

The next 10 membrane-spanning stretches (helical) occupy residues 28-48, 70-90, 92-112, 133-153, 165-185, 196-216, 233-253, 260-280, 285-305, and 335-355; these read AALM…ITWL, TPTM…LLWA, LTNI…AVGF, MGGQ…NPDY, VTFD…VAAS, GLAI…IYIT, VGEV…FLWF, VFMG…LALL, LVLA…IVQV, and KIII…LSVL.

This sequence belongs to the glycosyltransferase 4 family. MraY subfamily. The cofactor is Mg(2+).

The protein resides in the cell inner membrane. The catalysed reaction is UDP-N-acetyl-alpha-D-muramoyl-L-alanyl-gamma-D-glutamyl-meso-2,6-diaminopimeloyl-D-alanyl-D-alanine + di-trans,octa-cis-undecaprenyl phosphate = di-trans,octa-cis-undecaprenyl diphospho-N-acetyl-alpha-D-muramoyl-L-alanyl-D-glutamyl-meso-2,6-diaminopimeloyl-D-alanyl-D-alanine + UMP. The protein operates within cell wall biogenesis; peptidoglycan biosynthesis. Catalyzes the initial step of the lipid cycle reactions in the biosynthesis of the cell wall peptidoglycan: transfers peptidoglycan precursor phospho-MurNAc-pentapeptide from UDP-MurNAc-pentapeptide onto the lipid carrier undecaprenyl phosphate, yielding undecaprenyl-pyrophosphoryl-MurNAc-pentapeptide, known as lipid I. This chain is Phospho-N-acetylmuramoyl-pentapeptide-transferase, found in Desulfovibrio desulfuricans (strain ATCC 27774 / DSM 6949 / MB).